The chain runs to 191 residues: MEYFDMRKMSVNLWRNAAGETREICTFPPAKRDFYWRASIASIAANGEFSLFPGMERIVTLLEGGEMLLESADRFNHTLKPLQPFAFTADQVVKAKLTAGQMSMDFNIMTRLDVCKAKVRIAERTFTTFGSRGGVVFVINGAWQLGDKLLTTDQGACWFDGRHTLRLLQPQGKLLFSEINWLAGHSPDQVQ.

This sequence belongs to the Ves family.

The chain is Protein Ves from Shigella flexneri serotype 5b (strain 8401).